Consider the following 88-residue polypeptide: MISSSHFAIFCIILVSLFALQQYEIGNMEENLNASKIVVYLSPCVRKRCSFSLFKNCHCCRGKYHFCSKNIKVCEKECLRLNPPRPLP.

The N-terminal stretch at 1–23 (MISSSHFAIFCIILVSLFALQQY) is a signal peptide. 4 disulfides stabilise this stretch: Cys-44-Cys-59, Cys-49-Cys-78, Cys-57-Cys-74, and Cys-60-Cys-67.

This sequence belongs to the MEG family. As to expression, expressed in stems.

This Arabidopsis thaliana (Mouse-ear cress) protein is EMBRYO SURROUNDING FACTOR 1-like protein 11 (ESFL11).